The primary structure comprises 241 residues: Meiotically up-regulated gene 130 protein (241 aa).

The protein localises to the mitochondrion. In terms of biological role, has a role in meiosis. The sequence is that of Meiotically up-regulated gene 130 protein (mug130) from Schizosaccharomyces pombe (strain 972 / ATCC 24843) (Fission yeast).